The primary structure comprises 241 residues: MAGHSKWANIKHKKAAADAKRGKVWTRLIKEITVAAKLGGGEFDSNPRLRLAMEKAMDANMPKDNIQRAIQRGVGGLEGANYEEIRYEGYGLAGAAIIVDCLTDNRTRTVAEVRHAFSKHGGNMGTEGSVAFMFTHCGQFLFAPGTPEDKLMDAALEAGADDVVTNDDESIEVTCPPNDFGAVKAALEAAGFKAEVADVVMKPQNEVSFVGDDAVKMQKLLDALENLDDVQEVFTNAVVEE.

The protein belongs to the TACO1 family.

Its subcellular location is the cytoplasm. The sequence is that of Probable transcriptional regulatory protein Rmet_0785 from Cupriavidus metallidurans (strain ATCC 43123 / DSM 2839 / NBRC 102507 / CH34) (Ralstonia metallidurans).